We begin with the raw amino-acid sequence, 242 residues long: Sensory transduction protein LytT (242 aa).

The Response regulatory domain maps to 2 to 116 (HVLIVDDEPL…KITQVIEKAS (115 aa)). Positions 137–241 (IPIQGEDRIY…VKEFKEKLGL (105 aa)) constitute an HTH LytTR-type domain.

Phosphorylated by LytS.

It localises to the cytoplasm. Member of the two-component regulatory system LytS/LytT that probably regulates genes involved in cell wall metabolism. The protein is Sensory transduction protein LytT (lytT) of Enterococcus faecalis (strain ATCC 700802 / V583).